A 478-amino-acid polypeptide reads, in one-letter code: Probable sodium/glutamine symporter GlnT (478 aa).

10 helical membrane passes run 14-34 (DLLW…YFTF), 85-105 (IAIA…IIAI), 145-165 (WMGA…FNSV), 185-205 (LGLI…KRIA), 211-231 (IVVV…FSNI), 236-256 (GVLA…GGAL), 298-318 (AFGV…IILF), 342-362 (GSWA…CALI), 381-401 (LIFV…VAKV), and 411-431 (FMGL…KVVF).

The protein belongs to the alanine or glycine:cation symporter (AGCS) (TC 2.A.25) family.

Its subcellular location is the cell membrane. Functionally, probably functions as a sodium/glutamine symporter for glutamine uptake. This is Probable sodium/glutamine symporter GlnT (glnT) from Bacillus subtilis (strain 168).